A 347-amino-acid polypeptide reads, in one-letter code: NADH-ubiquinone oxidoreductase chain 2 (347 aa).

A run of 11 helical transmembrane segments spans residues 3 to 23, 25 to 45, 67 to 87, 96 to 116, 122 to 142, 145 to 165, 178 to 198, 200 to 220, 239 to 259, 274 to 294, and 325 to 345; these read PIIF…VMIS, HWLL…PIMM, SMLL…WTVM, MLMT…FWVP, IPLS…MSVL, IFPS…ILIG, IMAY…PYNP, MTLL…TMFM, IMTV…PLSG, NSII…YFYM, and FLPT…MLSV.

This sequence belongs to the complex I subunit 2 family. In terms of assembly, core subunit of respiratory chain NADH dehydrogenase (Complex I) which is composed of 45 different subunits. Interacts with TMEM242.

The protein localises to the mitochondrion inner membrane. It catalyses the reaction a ubiquinone + NADH + 5 H(+)(in) = a ubiquinol + NAD(+) + 4 H(+)(out). In terms of biological role, core subunit of the mitochondrial membrane respiratory chain NADH dehydrogenase (Complex I) which catalyzes electron transfer from NADH through the respiratory chain, using ubiquinone as an electron acceptor. Essential for the catalytic activity and assembly of complex I. The chain is NADH-ubiquinone oxidoreductase chain 2 from Bos indicus (Zebu).